Reading from the N-terminus, the 85-residue chain is Conotoxin Mi15a (85 aa).

The signal sequence occupies residues 1–23; it reads MEKLTVLILVATVLLTIQVLGQS. Positions 24 to 49 are excised as a propeptide; that stretch reads DRDKHLKRRPKQYATKRLSARMRGHR. Pyrrolidone carboxylic acid is present on Gln-50.

It belongs to the conotoxin O2 superfamily. Post-translationally, contains 4 disulfide bonds. In terms of tissue distribution, expressed by the venom duct.

The protein localises to the secreted. This Conus miles (Soldier cone) protein is Conotoxin Mi15a.